Consider the following 261-residue polypeptide: Triosephosphate isomerase (261 aa).

10 to 12 (NWK) serves as a coordination point for substrate. The active-site Electrophile is H100. The active-site Proton acceptor is E172. Residues G178, S218, and 239–240 (GG) contribute to the substrate site.

This sequence belongs to the triosephosphate isomerase family. As to quaternary structure, homodimer.

The protein resides in the cytoplasm. The catalysed reaction is D-glyceraldehyde 3-phosphate = dihydroxyacetone phosphate. Its pathway is carbohydrate biosynthesis; gluconeogenesis. The protein operates within carbohydrate degradation; glycolysis; D-glyceraldehyde 3-phosphate from glycerone phosphate: step 1/1. Involved in the gluconeogenesis. Catalyzes stereospecifically the conversion of dihydroxyacetone phosphate (DHAP) to D-glyceraldehyde-3-phosphate (G3P). This chain is Triosephosphate isomerase, found in Rhodococcus jostii (strain RHA1).